The sequence spans 230 residues: 2-amino-5-formylamino-6-ribosylaminopyrimidin-4(3H)-one 5'-monophosphate deformylase (230 aa).

Fe cation contacts are provided by E29, H31, D40, and H109.

It belongs to the creatininase superfamily. FAPy deformylase family. In terms of assembly, homodimer. Requires Fe(2+) as cofactor. Zn(2+) is required as a cofactor.

The catalysed reaction is 2-amino-5-formylamino-6-(5-phospho-D-ribosylamino)pyrimidin-4(3H)-one + H2O = 2,5-diamino-6-(1-D-ribosylamino)pyrimidin-4(3H)-one 5'-phosphate + formate + H(+). The protein operates within cofactor biosynthesis; coenzyme F420 biosynthesis. It participates in cofactor biosynthesis; riboflavin biosynthesis. In terms of biological role, catalyzes the hydrolysis of the formamide of 2-amino-5-formylamino-6-ribosylamino-4(3H)-pyrimidinone 5'-monophosphate (FAPy) to form 2,5-diamino-6-ribosylamino-4(3H)-pyrimidinone 5'-phosphate (APy). The chain is 2-amino-5-formylamino-6-ribosylaminopyrimidin-4(3H)-one 5'-monophosphate deformylase from Methanobrevibacter smithii (strain ATCC 35061 / DSM 861 / OCM 144 / PS).